We begin with the raw amino-acid sequence, 372 residues long: MKSYIIVGAGILGASTAYHLAKTGARVTVIDRKEPGQATDAAAGIVCPWLSQRRNQDWYQLAKGGARYYKDLIHQLEKDGESDTGYKRVGAISIHTDASKLDKMEERAYKRREDAPEIGDITRLSASETKKLFPILADGYESVHISGAARVNGRALCRSLLSAAEKRGATVIKGNASLLFENGTVTGVQTDTKQFAADAVIVTAGAWANEILKPLGIHFQVSFQKAQIMHFEMTDADTGSWPVVMPPSDQYILSFDNGRIVAGATHENDAGLDDLRVTAGGQHEVLSKALAVAPGLADAAAVETRVGFRPFTPGFLPVVGAVPNVQGLYAANGLGASGLTMGPFLGAELAKLVLGKQTELDLSPYDPAGALA.

Residue Tyr4–Tyr18 coordinates FAD.

The protein belongs to the DadA oxidoreductase family. FAD is required as a cofactor.

This is an uncharacterized protein from Bacillus subtilis (strain 168).